The chain runs to 430 residues: Alpha-humulene synthase asR6 (430 aa).

This sequence belongs to the terpene synthase family. Alpha-humulene synthase eupE subfamily. Requires Mg(2+) as cofactor.

It carries out the reaction (2E,6E)-farnesyl diphosphate = alpha-humulene + diphosphate. The protein operates within secondary metabolite biosynthesis; terpenoid biosynthesis. Its function is as follows. Alpha-humulene synthase; part of the gene cluster that mediates the biosynthesis of xenovulene A, an unusual meroterpenoid that has potent inhibitory effects on the human gamma-aminobutyrate A (GABAA) benzodiazepine receptor. The first step of xenovulene A biosynthesis is the biosynthesis of 3-methylorcinaldehyde performed by the non-reducing polyketide synthase aspks1. The salicylate hydroxylase asL1 then catalyzes the oxidative dearomatization of 3-methylorcinaldehyde to yield a dearomatized hydroxycyclohexadione. The 2-oxoglutarate-dependent dioxygenase asL3 further catalyzes the oxidative ring expansion to provide the first tropolone metabolite. The cytochrome P450 monooxygenase asR2 allows the synthesis of tropolone hemiacetal. In parallel, a previously unrecognised class of terpene cyclase, asR6, produces alpha-humulene from farnesylpyrophosphate (FPP). The putative Diels-Alderase asR5 probably catalyzes the formation of the tropolone-humulene skeleton by linking humulene and the polyketide moiety. Oxidative-ring contractions catalyzed by asL4 and asL6 then processively remove carbon atoms from the polyketide to yield xenovulene A. This Sarocladium schorii (Acremonium strictum (strain IMI 501407)) protein is Alpha-humulene synthase asR6.